The sequence spans 817 residues: Rho GTPase-activating protein gacII (817 aa).

The 185-residue stretch at 20 to 204 folds into the Rho-GAP domain; that stretch reads TTIVKIGTPK…TLIEEFQYIS (185 aa). One can recognise an SH3 domain in the interval 238–298; the sequence is EDYLIAKANT…SQTYVDIIDI (61 aa). The span at 318-339 shows a compositional bias: low complexity; sequence ASTILHTPPTSSSSSSSSSSSS. Disordered stretches follow at residues 318–638, 691–771, and 783–817; these read ASTI…NIPV, LGGQ…QQQQ, and LPPQ…FNKN. Residues 340 to 358 show a composition bias toward polar residues; it reads ILLTDNQPKLCSSTPRINN. Low complexity predominate over residues 359-391; sequence SPSSFSPSLSSTTPQLLVQQSPRQSPRQIPSIS. Residues 396 to 438 are compositionally biased toward polar residues; that stretch reads PNNTNQPSFGHGTLQRTSTGYFSSKPLSISQPINMSKPTNMSP. The segment covering 461-471 has biased composition (pro residues); it reads PPLPTKPPPLT. Over residues 472–498 the composition is skewed to low complexity; that stretch reads IPSSSSLPTTPIKQQPQQPIQQPLTPQ. The segment covering 509 to 532 has biased composition (polar residues); it reads LSSSVNTANTGNCANILSPNSDRY. 3 stretches are compositionally biased toward low complexity: residues 534 to 568, 577 to 587, and 607 to 624; these read SSRS…SSTS, KSKSSKNSPSK, and ITTT…TIAT. Residues 625-635 show a composition bias toward pro residues; it reads TPPPPSKPLPN. A compositionally biased stretch (polar residues) spans 705 to 722; the sequence is KSQSSYLDNNNLPSRNTN. Over residues 725 to 734 the composition is skewed to pro residues; the sequence is NLPPRPPPLN. Low complexity-rich tracts occupy residues 735–744 and 752–771; these read IPQQQQQYKP and QSPQ…QQQQ. Polar residues predominate over residues 785–803; the sequence is PQNTNLSGKNLQRSSTSML. The segment covering 807–817 has biased composition (pro residues); the sequence is LPPPPFSFNKN.

It is found in the cytoplasm. Functionally, rho GTPase-activating protein involved in the signal transduction pathway. This is Rho GTPase-activating protein gacII (gacII) from Dictyostelium discoideum (Social amoeba).